Here is an 868-residue protein sequence, read N- to C-terminus: Phospholipase D delta (868 aa).

In terms of domain architecture, C2 spans Met1 to Phe154. Ca(2+) is bound at residue Asp216. The 36-residue stretch at Thr368–Arg403 folds into the PLD phosphodiesterase 1 domain. Catalysis depends on residues His373, Lys375, and Asp380. Residue His373 participates in a 1,2-diacyl-sn-glycero-3-phosphate binding. His409 and His440 together coordinate Ca(2+). 2 residues coordinate a 1,2-diacyl-sn-glycero-3-phosphate: Gln588 and His718. The PLD phosphodiesterase 2 domain maps to Phe713–Ser740. Residues His718, Lys720, and Asp725 contribute to the active site. Position 781 (Glu781) interacts with Ca(2+).

The protein belongs to the phospholipase D family. C2-PLD subfamily. Interacts with GAPC1 and GAPC2. Increased interaction in the presence of H(2)O(2). It depends on Ca(2+) as a cofactor. In terms of tissue distribution, expressed in roots, leaves, stems, siliques and flowers. Strongly expressed in the vascular tissues of cotyledons and leaves under dehydration stress conditions. Expression is higher in old leaves than in young leaves. Expressed in leaves and guard cells. The isoform 2 may not be present in siliques.

The protein localises to the cell membrane. The catalysed reaction is a 1,2-diacyl-sn-glycero-3-phosphocholine + H2O = a 1,2-diacyl-sn-glycero-3-phosphate + choline + H(+). With respect to regulation, activated by free oleic acid in a dose-dependent manner and less effectively by other unsaturated fatty acids such as linoleic and linolenic acids. Not activated by the saturated fatty acids stearic and palmitic acids. PIP2 and Ca(2+) stimulate activity by promoting lipid substrate binding to the active site. Activated by H(2)O(2) and by binding to GAPC. Functionally, hydrolyzes glycerol-phospholipids at the terminal phosphodiesteric bond to generate phosphatidic acids (PA). May be involved in PA accumulation in the dehydration stress response and in the transduction of hormonal and environmental signals to the microtubules cytoskeleton. Prefers phosphatidylethanolamine to phosphatidylcholine as substrate. Involved in H(2)O(2) and abscisic acid (ABA)-induced stomatal closure. Involved in nitric oxide (NO) signaling during stomatal closure. Plays a positive role in ABA-promoted senescence. Involved in basal defense and nonhost resistance. This Arabidopsis thaliana (Mouse-ear cress) protein is Phospholipase D delta.